The chain runs to 122 residues: MSLTNEQIIEAIGQKTVLEIVELIKAMEETFGVTAAAAVAAGPAVAAAAAEEQTEFNVVLTEAGDKKVNVIKAVRELTGLGLKEAKEKVDGAPQVIAEGVSKEAAEDAKKKLEEAGAKVELK.

It belongs to the bacterial ribosomal protein bL12 family. In terms of assembly, homodimer. Part of the ribosomal stalk of the 50S ribosomal subunit. Forms a multimeric L10(L12)X complex, where L10 forms an elongated spine to which 2 to 4 L12 dimers bind in a sequential fashion. Binds GTP-bound translation factors.

Its function is as follows. Forms part of the ribosomal stalk which helps the ribosome interact with GTP-bound translation factors. Is thus essential for accurate translation. This Pseudomonas entomophila (strain L48) protein is Large ribosomal subunit protein bL12.